Reading from the N-terminus, the 189-residue chain is Apolipophorin-3 (189 aa).

Residues 1–18 (MAAKFVVVLAACVALSHS) form the signal peptide. A propeptide spanning residues 19–23 (AMVRR) is cleaved from the precursor.

This sequence belongs to the insect apolipophorin-3 family. As to quaternary structure, equilibrium between a soluble monomer and a bound lipoprotein form. Apolipophorin-3 associates with lipophorin during lipid loading until each particle contains 9 or 14 molecules of apolipophorin-3. In terms of tissue distribution, hemolymph.

Its subcellular location is the secreted. In terms of biological role, assists in the loading of diacylglycerol, generated from triacylglycerol stores in the fat body through the action of adipokinetic hormone, into lipophorin, the hemolymph lipoprotein. It increases the lipid carrying capacity of lipophorin by covering the expanding hydrophobic surface resulting from diacylglycerol uptake. It thus plays a critical role in the transport of lipids during flight in several species of insects. In Manduca sexta (Tobacco hawkmoth), this protein is Apolipophorin-3.